Here is a 104-residue protein sequence, read N- to C-terminus: MFAVIKTGGKQYRVAADAVLTIEKLEAEAGATVEFTEVLVIGEGADAQFGAPFVKGAIVKAEVVEHNRGKKVIAFKKRRRQNSKRSRGHRQHHTVVRITDIVAA.

It belongs to the bacterial ribosomal protein bL21 family. Part of the 50S ribosomal subunit. Contacts protein L20.

Functionally, this protein binds to 23S rRNA in the presence of protein L20. This Agrobacterium fabrum (strain C58 / ATCC 33970) (Agrobacterium tumefaciens (strain C58)) protein is Large ribosomal subunit protein bL21.